Reading from the N-terminus, the 504-residue chain is Histidine ammonia-lyase (504 aa).

A cross-link (5-imidazolinone (Ala-Gly)) is located at residues 141–143; sequence ASG. Ser142 carries the post-translational modification 2,3-didehydroalanine (Ser).

It belongs to the PAL/histidase family. In terms of processing, contains an active site 4-methylidene-imidazol-5-one (MIO), which is formed autocatalytically by cyclization and dehydration of residues Ala-Ser-Gly.

The protein resides in the cytoplasm. It carries out the reaction L-histidine = trans-urocanate + NH4(+). It participates in amino-acid degradation; L-histidine degradation into L-glutamate; N-formimidoyl-L-glutamate from L-histidine: step 1/3. The chain is Histidine ammonia-lyase from Geobacillus kaustophilus (strain HTA426).